The chain runs to 273 residues: Cell wall mannoprotein 1 (273 aa).

The N-terminal stretch at 1–17 (MRFSAIFTLGLAGTALA) is a signal peptide. The tract at residues 173 to 247 (DVSDSAPSSS…GSASATSPPL (75 aa)) is disordered. The segment covering 177–247 (SAPSSSAGSS…GSASATSPPL (71 aa)) has biased composition (low complexity).

The protein belongs to the cell wall mannoprotein 1 family. In terms of processing, galactomannoprotein, glycosylated.

It is found in the secreted. It localises to the cell wall. In terms of biological role, constitutive protein of the cell wall. Antigen target of host humoral immune response. In Aspergillus flavus, this protein is Cell wall mannoprotein 1.